The primary structure comprises 252 residues: Imidazole glycerol phosphate synthase subunit HisF (252 aa).

Residues Asp-11 and Asp-130 contribute to the active site.

It belongs to the HisA/HisF family. Heterodimer of HisH and HisF.

Its subcellular location is the cytoplasm. The catalysed reaction is 5-[(5-phospho-1-deoxy-D-ribulos-1-ylimino)methylamino]-1-(5-phospho-beta-D-ribosyl)imidazole-4-carboxamide + L-glutamine = D-erythro-1-(imidazol-4-yl)glycerol 3-phosphate + 5-amino-1-(5-phospho-beta-D-ribosyl)imidazole-4-carboxamide + L-glutamate + H(+). It functions in the pathway amino-acid biosynthesis; L-histidine biosynthesis; L-histidine from 5-phospho-alpha-D-ribose 1-diphosphate: step 5/9. Functionally, IGPS catalyzes the conversion of PRFAR and glutamine to IGP, AICAR and glutamate. The HisF subunit catalyzes the cyclization activity that produces IGP and AICAR from PRFAR using the ammonia provided by the HisH subunit. The polypeptide is Imidazole glycerol phosphate synthase subunit HisF (Thermococcus kodakarensis (strain ATCC BAA-918 / JCM 12380 / KOD1) (Pyrococcus kodakaraensis (strain KOD1))).